The sequence spans 175 residues: Cyclic pyranopterin monophosphate synthase (175 aa).

Residues 78–80 (LCH) and 125–126 (ME) each bind substrate. D140 is an active-site residue.

It belongs to the MoaC family. As to quaternary structure, homohexamer; trimer of dimers.

It catalyses the reaction (8S)-3',8-cyclo-7,8-dihydroguanosine 5'-triphosphate = cyclic pyranopterin phosphate + diphosphate. The protein operates within cofactor biosynthesis; molybdopterin biosynthesis. Its function is as follows. Catalyzes the conversion of (8S)-3',8-cyclo-7,8-dihydroguanosine 5'-triphosphate to cyclic pyranopterin monophosphate (cPMP). In Rhodopirellula baltica (strain DSM 10527 / NCIMB 13988 / SH1), this protein is Cyclic pyranopterin monophosphate synthase.